A 1510-amino-acid polypeptide reads, in one-letter code: Chromosome partition protein MukB (1510 aa).

The stretch at 6-30 (ELENEIELESDEVIMENENVEEIVD) forms a coiled coil. Residue 75–82 (GGNGAGKS) coordinates ATP. Coiled coils occupy residues 346–506 (QHRL…HKMS), 553–633 (QQTP…NLTA), 673–706 (MQSQ…RLSQ), 821–847 (RAAR…QIAF), 876–1064 (EELM…IQLQ), 1094–1149 (ERAR…RELV), and 1249–1305 (DAIE…QNIS). A flexible hinge region spans residues 707-824 (PDGSEDPRLN…EIPLFGRAAR (118 aa)).

Belongs to the SMC family. MukB subfamily. In terms of assembly, homodimerization via its hinge domain. Binds to DNA via its C-terminal region. Interacts, and probably forms a ternary complex, with MukE and MukF via its C-terminal region. The complex formation is stimulated by calcium or magnesium. Interacts with tubulin-related protein FtsZ.

It is found in the cytoplasm. Its subcellular location is the nucleoid. In terms of biological role, plays a central role in chromosome condensation, segregation and cell cycle progression. Functions as a homodimer, which is essential for chromosome partition. Involved in negative DNA supercoiling in vivo, and by this means organize and compact chromosomes. May achieve or facilitate chromosome segregation by condensation DNA from both sides of a centrally located replisome during cell division. The protein is Chromosome partition protein MukB of Haemophilus influenzae (strain 86-028NP).